Here is a 70-residue protein sequence, read N- to C-terminus: Brevinin-1MT1 (70 aa).

The signal sequence occupies residues 1–22 (MFTLKKSLLLLFFLGTINLSLC). The propeptide occupies 23–44 (EQERDADEEERRDDDEMDVEVE). A disulfide bond links C64 and C70.

It belongs to the frog skin active peptide (FSAP) family. Brevinin subfamily. Expressed by the skin glands.

The protein resides in the secreted. Functionally, antimicrobial peptide with activity against a variety of Gram-negative and Gram-positive bacteria and against fungi. Shows strong hemolytic activity against human erythrocytes. This is Brevinin-1MT1 from Amolops mantzorum (Sichuan torrent frog).